The primary structure comprises 598 residues: Nuclear receptor subfamily 4immunitygroup A member 1 (598 aa).

Disordered stretches follow at residues 1 to 44 (MPCI…EAAP), 131 to 158 (YYGS…DGSF), 177 to 206 (LPKA…AQSP), and 221 to 265 (GESY…GSEG). A compositionally biased stretch (low complexity) spans 134–145 (SPCSAPSPSTPS). The required for nuclear import stretch occupies residues 171–466 (RAWTEQLPKA…PGEGKLIFCS (296 aa)). A DNA-binding region (nuclear receptor) is located at residues 264-339 (EGRCAVCGDN…VGMVKEVVRT (76 aa)). NR C4-type zinc fingers lie at residues 267–287 (CAVC…CEGC) and 303–327 (CLAN…FQKC). Residues 268-354 (AVCGDNASCQ…RRGRLPSKPK (87 aa)) are required for binding NBRE-containing DNA. The tract at residues 299 to 361 (AKYICLANKD…KPKQPPDASP (63 aa)) is required for the interaction with RXRA. Serine 341 is subject to Phosphoserine; by PKA. Positions 341–361 (SLKGRRGRLPSKPKQPPDASP) are disordered. Residue serine 351 is modified to Phosphoserine. Residues 360-595 (SPANLLTSLV…PIIDKIFMDT (236 aa)) form the NR LBD domain. The interval 521 to 544 (PRRVEELQNRIASCLKEHVAAVAG) is binds lipopolysaccharide. Positions 584–595 (PPPIIDKIFMDT) are AF-2.

It belongs to the nuclear hormone receptor family. NR4 subfamily. In terms of assembly, binds the NGFI-B response element (NBRE) as a monomer. Binds the Nur response element (NurRE), consisting of two inverse NBRE-related octanucleotide repeats separated by 6 base-pairs, as a dimer. Interacts (via N-terminus) with NLRP3 (via LRR repeat domain); the interaction is direct, requires binding of NR4A1/Nur77 to NBRE-containing dsDNA and lipopolysaccharide, and leads to non-canonical NLRP3 inflammasome activation. Interacts with GADD45GIP1. Interacts with STK11. Interacts with IFI27. Heterodimer (via DNA-binding domain) with RXRA (via C-terminus); DNA-binding of the heterodimer is enhanced by 9-cis retinoic acid. Competes for the RXRA interaction with EP300 and thereby attenuates EP300 mediated acetylation of RXRA. Interacts with NCOA1. Interacts with NCOA2. Interacts with NCOA3. Zn(2+) serves as cofactor. In terms of processing, phosphorylated at Ser-351 by RPS6KA1 and RPS6KA3 in response to mitogenic or stress stimuli. Acetylated by p300/CBP, acetylation increases stability. Deacetylated by HDAC1. In terms of tissue distribution, fetal muscle and adult liver, brain and thyroid.

Its subcellular location is the nucleus. It is found in the cytoplasm. The protein resides in the cytosol. The protein localises to the mitochondrion. With respect to regulation, its transcription factor activity is activated by binding cytosporone B (Csn-B) via its ligand-binding (NR LBD) domain and stimulates recruitment of coactivators NCOA1 and NCOA2, but not NCOA3, to promoters. Csn-B-binding is also accompanied by its translocation to the mitochondrion. Its transcription factor activity is activated by corticotropin-releasing hormone (CRH) and forskolin. Not activated by binding cytosporone C (Csn-C). Functionally, orphan nuclear receptor. Binds the NGFI-B response element (NBRE) 5'-AAAGGTCA-3'. Binds 9-cis-retinoic acid outside of its ligand-binding (NR LBD) domain. Participates in energy homeostasis by sequestrating the kinase STK11 in the nucleus, thereby attenuating cytoplasmic AMPK activation. Regulates the inflammatory response in macrophages by regulating metabolic adaptations during inflammation, including repressing the transcription of genes involved in the citric acid cycle (TCA). Inhibits NF-kappa-B signaling by binding to low-affinity NF-kappa-B binding sites, such as at the IL2 promoter. May act concomitantly with NR4A2 in regulating the expression of delayed-early genes during liver regeneration. Plays a role in the vascular response to injury. In terms of biological role, in the cytosol, upon its detection of both bacterial lipopolysaccharide (LPS) and NBRE-containing mitochondrial DNA released by GSDMD pores during pyroptosis, it promotes non-canonical NLRP3 inflammasome activation by stimulating association of NLRP3 and NEK7. This Homo sapiens (Human) protein is Nuclear receptor subfamily 4immunitygroup A member 1 (NR4A1).